A 300-amino-acid chain; its full sequence is tRNA pseudouridine synthase B (300 aa).

The Nucleophile role is filled by Asp47.

This sequence belongs to the pseudouridine synthase TruB family. Type 1 subfamily.

It catalyses the reaction uridine(55) in tRNA = pseudouridine(55) in tRNA. Functionally, responsible for synthesis of pseudouridine from uracil-55 in the psi GC loop of transfer RNAs. This chain is tRNA pseudouridine synthase B, found in Azoarcus sp. (strain BH72).